We begin with the raw amino-acid sequence, 487 residues long: Histamine H1 receptor (487 aa).

The Extracellular portion of the chain corresponds to 1 to 29; sequence MSLPNSSCLLEDKMCEGNKTTMASPQLMP. Asn-5 and Asn-18 each carry an N-linked (GlcNAc...) asparagine glycan. A helical membrane pass occupies residues 30-50; sequence LVVVLSTICLVTVGLNLLVLY. The Cytoplasmic segment spans residues 51–64; that stretch reads AVRSERKLHTVGNL. Residues 65–89 traverse the membrane as a helical segment; it reads YIVSLSVADLIVGAVVMPMNILYLL. Topologically, residues 90–97 are extracellular; the sequence is MSKWSLGR. Residues 98–123 traverse the membrane as a helical segment; that stretch reads PLCLFWLSMDYVASTASIFSVFILCI. Cysteines 100 and 180 form a disulfide. Histamine is bound by residues Asp-107 and Thr-112. An important for agonist binding region spans residues 107–112; sequence DYVAST. Over 124 to 144 the chain is Cytoplasmic; it reads DRYRSVQQPLRYLKYRTKTRA. Thr-140 and Thr-142 each carry phosphothreonine. A helical transmembrane segment spans residues 145–164; that stretch reads SATILGAWFLSFLWVIPILG. Over 165 to 188 the chain is Extracellular; the sequence is WNHFMQQTSVRREDKCETDFYDVT. A helical transmembrane segment spans residues 189-211; the sequence is WFKVMTAIINFYLPTLLMLWFYA. Asn-198 contacts histamine. The Cytoplasmic segment spans residues 212 to 416; sequence KIYKAVRQHC…MNRERKAAKQ (205 aa). Position 230 is a phosphoserine (Ser-230). Basic and acidic residues predominate over residues 238 to 261; the sequence is KLRPENPKGDAKKPGKESPWEVLK. Positions 238 to 291 are disordered; it reads KLRPENPKGDAKKPGKESPWEVLKRKPKDAGGGSVLKSPSQTPKEMKSPVVFSQ. Thr-279 is modified (phosphothreonine). Ser-344 and Ser-347 each carry phosphoserine. Residues 345 to 379 form a disordered region; that stretch reads EISEDQMLGDSQSFSRTDSDTTTETAPGKGKLRSG. The span at 353–369 shows a compositional bias: polar residues; the sequence is GDSQSFSRTDSDTTTET. Residues Ser-380, Ser-396, and Ser-398 each carry the phosphoserine modification. A helical membrane pass occupies residues 417 to 440; sequence LGFIMAAFILCWIPYFIFFMVIAF. Residues 424–428 form an important for agonist binding region; that stretch reads FILCW. Histamine is bound at residue Tyr-431. Cys-441 and Cys-444 form a disulfide bridge. At 441 to 446 the chain is on the extracellular side; that stretch reads CKNCCN. The helical transmembrane segment at 447–469 threads the bilayer; it reads EHLHMFTIWLGYINSTLNPLIYP. At 470-487 the chain is on the cytoplasmic side; that stretch reads LCNENFKKTFKRILHIRS.

Belongs to the G-protein coupled receptor 1 family. In terms of processing, phosphorylation at sites in the second and third cytoplasmic loops independently contribute to agonist-induced receptor down-regulation.

Its subcellular location is the cell membrane. G-protein-coupled receptor for histamine, a biogenic amine that functions as an immune modulator and a neurotransmitter. Through the H1 receptor, histamine mediates the contraction of smooth muscles and increases capillary permeability due to contraction of terminal venules. Also mediates neurotransmission in the central nervous system and thereby regulates circadian rhythms, emotional and locomotor activities as well as cognitive functions. The protein is Histamine H1 receptor of Homo sapiens (Human).